The sequence spans 207 residues: Small ribosomal subunit protein uS4 (207 aa).

The segment at 31–53 (KAKFDSKPGQHGRTSGARTSDFG) is disordered. Positions 97–160 (SRLDNVVYRM…KKQNRIVEAL (64 aa)) constitute an S4 RNA-binding domain.

The protein belongs to the universal ribosomal protein uS4 family. As to quaternary structure, part of the 30S ribosomal subunit. Contacts protein S5. The interaction surface between S4 and S5 is involved in control of translational fidelity.

One of the primary rRNA binding proteins, it binds directly to 16S rRNA where it nucleates assembly of the body of the 30S subunit. Its function is as follows. With S5 and S12 plays an important role in translational accuracy. This chain is Small ribosomal subunit protein uS4, found in Albidiferax ferrireducens (strain ATCC BAA-621 / DSM 15236 / T118) (Rhodoferax ferrireducens).